A 190-amino-acid polypeptide reads, in one-letter code: dTTP/UTP pyrophosphatase (190 aa).

D71 serves as the catalytic Proton acceptor.

The protein belongs to the Maf family. YhdE subfamily. The cofactor is a divalent metal cation.

It is found in the cytoplasm. The enzyme catalyses dTTP + H2O = dTMP + diphosphate + H(+). It carries out the reaction UTP + H2O = UMP + diphosphate + H(+). Nucleoside triphosphate pyrophosphatase that hydrolyzes dTTP and UTP. May have a dual role in cell division arrest and in preventing the incorporation of modified nucleotides into cellular nucleic acids. The polypeptide is dTTP/UTP pyrophosphatase (Xanthomonas axonopodis pv. citri (strain 306)).